A 187-amino-acid polypeptide reads, in one-letter code: Elongation factor P 2 (187 aa).

This sequence belongs to the elongation factor P family.

It is found in the cytoplasm. Its pathway is protein biosynthesis; polypeptide chain elongation. Involved in peptide bond synthesis. Stimulates efficient translation and peptide-bond synthesis on native or reconstituted 70S ribosomes in vitro. Probably functions indirectly by altering the affinity of the ribosome for aminoacyl-tRNA, thus increasing their reactivity as acceptors for peptidyl transferase. This is Elongation factor P 2 from Geobacter sulfurreducens (strain ATCC 51573 / DSM 12127 / PCA).